We begin with the raw amino-acid sequence, 60 residues long: Cytotoxin 2 (60 aa).

4 cysteine pairs are disulfide-bonded: C3-C21, C14-C38, C42-C53, and C54-C59.

This sequence belongs to the three-finger toxin family. Short-chain subfamily. Type IA cytotoxin sub-subfamily. As to quaternary structure, monomer, or heterodimer with alpha-cobratoxin (AC P01391); disulfide-linked. In terms of tissue distribution, expressed by the venom gland.

It is found in the secreted. Its subcellular location is the target cell membrane. Monomer: shows cytolytic activity. Functionally, heterodimer: has no cytolytic activity, but retains most of the alpha-cobratoxin capacity to compete with alpha-bungarotoxin for binding to Torpedo and alpha-7/CHRNA7 nicotinic acetylcholine receptors (nAChRs) as well as to Lymnea stagnalis acetylcholine-binding protein. In Naja kaouthia (Monocled cobra), this protein is Cytotoxin 2.